A 239-amino-acid polypeptide reads, in one-letter code: Protein GrpE (239 aa).

2 disordered regions span residues 1–50 (MIEN…INTE) and 209–239 (MGHG…SEDV). Over residues 16–30 (VLNQDNAPEDNSSAA) the composition is skewed to polar residues. The segment covering 218 to 239 (EEVEKDTVEEDIDSEENTSEDV) has biased composition (acidic residues).

It belongs to the GrpE family. In terms of assembly, homodimer.

The protein localises to the cytoplasm. Functionally, participates actively in the response to hyperosmotic and heat shock by preventing the aggregation of stress-denatured proteins, in association with DnaK and GrpE. It is the nucleotide exchange factor for DnaK and may function as a thermosensor. Unfolded proteins bind initially to DnaJ; upon interaction with the DnaJ-bound protein, DnaK hydrolyzes its bound ATP, resulting in the formation of a stable complex. GrpE releases ADP from DnaK; ATP binding to DnaK triggers the release of the substrate protein, thus completing the reaction cycle. Several rounds of ATP-dependent interactions between DnaJ, DnaK and GrpE are required for fully efficient folding. In Prochlorococcus marinus (strain MIT 9312), this protein is Protein GrpE.